Consider the following 151-residue polypeptide: Putative pre-16S rRNA nuclease (151 aa).

Belongs to the YqgF nuclease family.

It is found in the cytoplasm. Functionally, could be a nuclease involved in processing of the 5'-end of pre-16S rRNA. In Paraburkholderia phymatum (strain DSM 17167 / CIP 108236 / LMG 21445 / STM815) (Burkholderia phymatum), this protein is Putative pre-16S rRNA nuclease.